Here is a 244-residue protein sequence, read N- to C-terminus: 3-oxoacyl-[acyl-carrier-protein] reductase FabG (244 aa).

Residues 12 to 15, T37, 59 to 60, and N86 contribute to the NADP(+) site; these read GASR and NV. S138 is a substrate binding site. Residue Y151 is the Proton acceptor of the active site. NADP(+)-binding positions include 151-155 and I184; that span reads YAAAK.

It belongs to the short-chain dehydrogenases/reductases (SDR) family. As to quaternary structure, homotetramer.

It carries out the reaction a (3R)-hydroxyacyl-[ACP] + NADP(+) = a 3-oxoacyl-[ACP] + NADPH + H(+). The protein operates within lipid metabolism; fatty acid biosynthesis. Functionally, catalyzes the NADPH-dependent reduction of beta-ketoacyl-ACP substrates to beta-hydroxyacyl-ACP products, the first reductive step in the elongation cycle of fatty acid biosynthesis. The protein is 3-oxoacyl-[acyl-carrier-protein] reductase FabG (fabG) of Vibrio cholerae serotype O1 (strain ATCC 39315 / El Tor Inaba N16961).